The sequence spans 443 residues: C4-dicarboxylate transport protein (443 aa).

Transmembrane regions (helical) follow at residues 10–30 (SLYF…HFYP), 46–66 (LIKM…IAGM), 78–98 (YALL…LIVV), 143–163 (IVGA…VIFG), 199–219 (PIGA…GSLV), 224–244 (LMIC…GGIC), 291–311 (VVGL…SIYL), 332–352 (ITLL…TGSG), and 354–374 (IVLA…LALI).

Belongs to the dicarboxylate/amino acid:cation symporter (DAACS) (TC 2.A.23) family.

It localises to the cell inner membrane. Responsible for the transport of dicarboxylates such as succinate, fumarate, and malate from the periplasm across the membrane. This is C4-dicarboxylate transport protein from Pseudomonas fluorescens (strain SBW25).